A 227-amino-acid chain; its full sequence is Orotidine 5'-phosphate decarboxylase (227 aa).

Substrate-binding positions include aspartate 8, lysine 30, 59 to 68 (DLKLYDIPNT), threonine 118, arginine 178, glutamine 187, glycine 207, and arginine 208. Lysine 61 functions as the Proton donor in the catalytic mechanism.

Belongs to the OMP decarboxylase family. Type 1 subfamily. As to quaternary structure, homodimer.

The catalysed reaction is orotidine 5'-phosphate + H(+) = UMP + CO2. It functions in the pathway pyrimidine metabolism; UMP biosynthesis via de novo pathway; UMP from orotate: step 2/2. In terms of biological role, catalyzes the decarboxylation of orotidine 5'-monophosphate (OMP) to uridine 5'-monophosphate (UMP). This Nitratiruptor sp. (strain SB155-2) protein is Orotidine 5'-phosphate decarboxylase.